Reading from the N-terminus, the 136-residue chain is uncharacterized protein (136 aa).

2 consecutive transmembrane segments (helical) span residues 25-47 and 78-97; these read ILKA…PHAF and ITGA…LLTA.

The protein localises to the cell membrane. This is an uncharacterized protein from Bacillus subtilis (strain 168).